We begin with the raw amino-acid sequence, 1663 residues long: TPR repeat-containing protein DDB_G0287407 (1663 aa).

Disordered stretches follow at residues 84-109 (RKTQPTSSNGSTSTTTTTTTTTQKGQ) and 326-359 (SEYSSTNDDGENDQSDDDDDNEDDDDFVEKNSNQ). Residues 89–105 (TSSNGSTSTTTTTTTTT) show a composition bias toward low complexity. Acidic residues predominate over residues 333 to 352 (DDGENDQSDDDDDNEDDDDF). TPR repeat units lie at residues 1110-1143 (SDVWFRVASFLEELSQFDGAEVLYNKCRELYINN), 1150-1183 (AKVDRAMGRMYLTMGQNDKSDSKFRLALSIYTKE), 1192-1225 (AITLNLLGTLATNRCKFDEAKQILNQAMNICESK), 1234-1269 (ADIAYSLGSVCFVEPNRKLEVAEAYFARSLELTESK), 1278-1311 (ARILTRLGSLNIEKDTYADAEAFFKAALKIYEAR), and 1320-1353 (SQILRHMISLYEVQENYKMAEQCCIRALAITKKI). Disordered regions lie at residues 1500-1528 (VAQPTSFNSPVQPPSPRTQQAIQQGQQQR) and 1544-1571 (QKVSSLQQQPQQQQQQQPSQGYGNRQNT). A coiled-coil region spans residues 1516 to 1547 (RTQQAIQQGQQQRQQVQQQQQQVQQQMSQKVS). Composition is skewed to low complexity over residues 1518 to 1528 (QQAIQQGQQQR) and 1544 to 1563 (QKVSSLQQQPQQQQQQQPSQ).

In Dictyostelium discoideum (Social amoeba), this protein is TPR repeat-containing protein DDB_G0287407.